We begin with the raw amino-acid sequence, 148 residues long: MSEQQPKVIESKEIMTLLPHRYPFLLVDRVLDFKEGEWLKAIKNISVNEPCFTGHFPGEPILPGVLILEALAQAMGILAFKTHELKGGELFYFAGIDEARFKRPVLPGDQMELNVQVIKKRRGITAFTGVATVNGEIACEAKLMCARR.

The active site involves histidine 55.

This sequence belongs to the thioester dehydratase family. FabZ subfamily.

It localises to the cytoplasm. It carries out the reaction a (3R)-hydroxyacyl-[ACP] = a (2E)-enoyl-[ACP] + H2O. Functionally, involved in unsaturated fatty acids biosynthesis. Catalyzes the dehydration of short chain beta-hydroxyacyl-ACPs and long chain saturated and unsaturated beta-hydroxyacyl-ACPs. In Haemophilus influenzae (strain ATCC 51907 / DSM 11121 / KW20 / Rd), this protein is 3-hydroxyacyl-[acyl-carrier-protein] dehydratase FabZ.